Reading from the N-terminus, the 221-residue chain is Retinitis pigmentosa 9 protein (221 aa).

Basic and acidic residues-rich tracts occupy residues 1–10 (MSSRPGREDV), 17–29 (RPREPPEQELQRR), and 60–69 (IKEDETKPED). The tract at residues 1–76 (MSSRPGREDV…PEDCIPDVPG (76 aa)) is disordered. A PIM1-binding region spans residues 1–155 (MSSRPGREDV…RDNKRHEKDV (155 aa)). A CCHC-type zinc finger spans residues 104–122 (QCWRCKRYGHRTGDKECPF). K129 is covalently cross-linked (Glycyl lysine isopeptide (Lys-Gly) (interchain with G-Cter in SUMO2)). Over residues 147 to 156 (DNKRHEKDVR) the composition is skewed to basic and acidic residues. The interval 147-221 (DNKRHEKDVR…SKSNEGSDSE (75 aa)) is disordered. The segment covering 184-212 (KHKKKKKKEKHKKRKKEKKKKKKRKHKSS) has biased composition (basic residues). A phosphoserine; by PIM1 mark is found at S212 and S214.

As to quaternary structure, binds to PIM1. Binds to ZNHIT4. As to expression, appears to be expressed in a wide range of tissues.

The protein resides in the nucleus. Its function is as follows. Is thought to be a target protein for the PIM1 kinase. May play some roles in B-cell proliferation in association with PIM1. This Homo sapiens (Human) protein is Retinitis pigmentosa 9 protein (RP9).